A 318-amino-acid polypeptide reads, in one-letter code: Basic leucine zipper (bZIP) transcription factor atfB (318 aa).

Residues 114 to 157 (FNSSPPEYAPPKHRSSLSEQSQTDGYGVSTRRRKASAIDQCEQQ) are disordered. A basic motif region spans residues 160–199 (REKREKFLERNRLAASKCRQKKKEHTKLLETRFREVSNKK). Residues 160–223 (REKREKFLER…LNLKNEMLRH (64 aa)) enclose the bZIP domain. Residues 202-216 (LESEIEHLRSEVLNL) form a leucine-zipper region. Residues 275–301 (DGPMQLPSEMGSPLDQRRDSEQSIMTE) are disordered.

This sequence belongs to the bZIP family. ATF subfamily.

It is found in the nucleus. Functionally, transcription factor that acts as a key player in the regulatory circuit that integrates secondary metabolism and cellular response to oxidative stress. Regulates the genes involved in development and stress response through direct binding to their promoters. Particularly involved in the resistance to oxidative stress in asexual conidiospores. This chain is Basic leucine zipper (bZIP) transcription factor atfB, found in Aspergillus oryzae (strain ATCC 42149 / RIB 40) (Yellow koji mold).